A 137-amino-acid chain; its full sequence is Small ribosomal subunit protein uS12 (137 aa).

The segment at 1 to 57 is disordered; that stretch reads MPTINQLVRKPRKSKVEKSKSPALNVGYNSHKKVQTNVSSPQKRGVATRVGTMTPKK. Asp-102 is subject to 3-methylthioaspartic acid.

It belongs to the universal ribosomal protein uS12 family. Part of the 30S ribosomal subunit. Contacts proteins S8 and S17. May interact with IF1 in the 30S initiation complex.

Functionally, with S4 and S5 plays an important role in translational accuracy. Interacts with and stabilizes bases of the 16S rRNA that are involved in tRNA selection in the A site and with the mRNA backbone. Located at the interface of the 30S and 50S subunits, it traverses the body of the 30S subunit contacting proteins on the other side and probably holding the rRNA structure together. The combined cluster of proteins S8, S12 and S17 appears to hold together the shoulder and platform of the 30S subunit. The sequence is that of Small ribosomal subunit protein uS12 from Streptococcus pneumoniae serotype 2 (strain D39 / NCTC 7466).